The following is a 327-amino-acid chain: Biotin synthase (327 aa).

The Radical SAM core domain occupies 49-275; that stretch reads RFGREVSLCS…VNPHAEVRMA (227 aa). [4Fe-4S] cluster-binding residues include Cys-67, Cys-71, and Cys-74. [2Fe-2S] cluster contacts are provided by Ser-112, Cys-143, Cys-203, and Arg-273.

It belongs to the radical SAM superfamily. Biotin synthase family. As to quaternary structure, homodimer. [4Fe-4S] cluster serves as cofactor. Requires [2Fe-2S] cluster as cofactor.

The enzyme catalyses (4R,5S)-dethiobiotin + (sulfur carrier)-SH + 2 reduced [2Fe-2S]-[ferredoxin] + 2 S-adenosyl-L-methionine = (sulfur carrier)-H + biotin + 2 5'-deoxyadenosine + 2 L-methionine + 2 oxidized [2Fe-2S]-[ferredoxin]. Its pathway is cofactor biosynthesis; biotin biosynthesis; biotin from 7,8-diaminononanoate: step 2/2. Catalyzes the conversion of dethiobiotin (DTB) to biotin by the insertion of a sulfur atom into dethiobiotin via a radical-based mechanism. In Maridesulfovibrio salexigens (strain ATCC 14822 / DSM 2638 / NCIMB 8403 / VKM B-1763) (Desulfovibrio salexigens), this protein is Biotin synthase.